The primary structure comprises 454 residues: Probable N-octanoylanthranilate hydrolase AqdA2 (454 aa).

S185 (acyl-ester intermediate) is an active-site residue. Catalysis depends on charge relay system residues E306 and H379.

This sequence belongs to the type-B carboxylesterase/lipase family.

The enzyme catalyses N-octanoylanthranilate + H2O = anthranilate + octanoate + H(+). Its function is as follows. Involved in the degradation of the Pseudomonas aeruginosa quorum sensing signal molecules HHQ (2-heptyl-4-quinolone) and PQS (2-heptyl-3-hydroxy-4-quinolone) to anthranilic acid. Probably catalyzes the hydrolysis of N-octanoylanthranilic acid to anthranilic acid. In Rhodococcus erythropolis (Arthrobacter picolinophilus), this protein is Probable N-octanoylanthranilate hydrolase AqdA2.